Reading from the N-terminus, the 360-residue chain is Phospho-N-acetylmuramoyl-pentapeptide-transferase (360 aa).

A run of 10 helical transmembrane segments spans residues 21 to 41, 73 to 93, 94 to 114, 145 to 165, 168 to 188, 199 to 219, 236 to 256, 263 to 283, 288 to 308, and 339 to 359; these read YLTL…LWLG, TMGG…WGDL, TNHY…IGWV, AVTL…VPLF, VVVP…VGSS, GLAI…AYAS, AGEL…FLWF, VFMG…VAVI, IVLF…MLQV, and IVRF…TLKI.

Belongs to the glycosyltransferase 4 family. MraY subfamily. Requires Mg(2+) as cofactor.

Its subcellular location is the cell inner membrane. It catalyses the reaction UDP-N-acetyl-alpha-D-muramoyl-L-alanyl-gamma-D-glutamyl-meso-2,6-diaminopimeloyl-D-alanyl-D-alanine + di-trans,octa-cis-undecaprenyl phosphate = di-trans,octa-cis-undecaprenyl diphospho-N-acetyl-alpha-D-muramoyl-L-alanyl-D-glutamyl-meso-2,6-diaminopimeloyl-D-alanyl-D-alanine + UMP. The protein operates within cell wall biogenesis; peptidoglycan biosynthesis. Functionally, catalyzes the initial step of the lipid cycle reactions in the biosynthesis of the cell wall peptidoglycan: transfers peptidoglycan precursor phospho-MurNAc-pentapeptide from UDP-MurNAc-pentapeptide onto the lipid carrier undecaprenyl phosphate, yielding undecaprenyl-pyrophosphoryl-MurNAc-pentapeptide, known as lipid I. In Chromohalobacter salexigens (strain ATCC BAA-138 / DSM 3043 / CIP 106854 / NCIMB 13768 / 1H11), this protein is Phospho-N-acetylmuramoyl-pentapeptide-transferase.